The following is a 480-amino-acid chain: NADH-quinone oxidoreductase subunit N (480 aa).

The next 13 membrane-spanning stretches (helical) occupy residues 13 to 33, 41 to 61, 81 to 101, 107 to 127, 132 to 152, 167 to 187, 212 to 232, 245 to 265, 276 to 296, 314 to 334, 373 to 393, 413 to 433, and 454 to 474; these read ISPM…QFLI, PLWV…YHTT, VWLS…APPF, TLFP…MFLT, LIVI…MIGM, FLLG…LYGG, LGLG…PFHS, ITGF…IILF, VWKY…NIVA, AGYI…YYLF, ALAL…IGFW, LLFG…KITI, and PTLG…WIFF.

Belongs to the complex I subunit 2 family. As to quaternary structure, NDH-1 is composed of 14 different subunits. Subunits NuoA, H, J, K, L, M, N constitute the membrane sector of the complex.

It localises to the cell inner membrane. It carries out the reaction a quinone + NADH + 5 H(+)(in) = a quinol + NAD(+) + 4 H(+)(out). NDH-1 shuttles electrons from NADH, via FMN and iron-sulfur (Fe-S) centers, to quinones in the respiratory chain. The immediate electron acceptor for the enzyme in this species is believed to be ubiquinone. Couples the redox reaction to proton translocation (for every two electrons transferred, four hydrogen ions are translocated across the cytoplasmic membrane), and thus conserves the redox energy in a proton gradient. The sequence is that of NADH-quinone oxidoreductase subunit N from Leptospira biflexa serovar Patoc (strain Patoc 1 / Ames).